Reading from the N-terminus, the 435-residue chain is Chaperone SurA (435 aa).

The signal sequence occupies residues Met-1–Ala-24. 2 PpiC domains span residues Asp-173 to Asp-274 and Val-286 to Asp-385.

The protein resides in the periplasm. The catalysed reaction is [protein]-peptidylproline (omega=180) = [protein]-peptidylproline (omega=0). In terms of biological role, chaperone involved in the correct folding and assembly of outer membrane proteins. Recognizes specific patterns of aromatic residues and the orientation of their side chains, which are found more frequently in integral outer membrane proteins. May act in both early periplasmic and late outer membrane-associated steps of protein maturation. This Chromohalobacter salexigens (strain ATCC BAA-138 / DSM 3043 / CIP 106854 / NCIMB 13768 / 1H11) protein is Chaperone SurA.